We begin with the raw amino-acid sequence, 66 residues long: Photosystem II reaction center protein H (66 aa).

Residues 27-47 (GAVPIMTVIGLLLLVFLVILL) traverse the membrane as a helical segment.

The protein belongs to the PsbH family. As to quaternary structure, PSII is composed of 1 copy each of membrane proteins PsbA, PsbB, PsbC, PsbD, PsbE, PsbF, PsbH, PsbI, PsbJ, PsbK, PsbL, PsbM, PsbT, PsbX, PsbY, Psb30/Ycf12, peripheral proteins PsbO, CyanoQ (PsbQ), PsbU, PsbV and a large number of cofactors. It forms dimeric complexes.

It is found in the cellular thylakoid membrane. In terms of biological role, one of the components of the core complex of photosystem II (PSII), required for its stability and/or assembly. PSII is a light-driven water:plastoquinone oxidoreductase that uses light energy to abstract electrons from H(2)O, generating O(2) and a proton gradient subsequently used for ATP formation. It consists of a core antenna complex that captures photons, and an electron transfer chain that converts photonic excitation into a charge separation. In Prochlorococcus marinus (strain MIT 9515), this protein is Photosystem II reaction center protein H.